A 308-amino-acid chain; its full sequence is UPF0282 protein YG5714_2245 (308 aa).

The protein belongs to the UPF0282 family.

The protein is UPF0282 protein YG5714_2245 of Saccharolobus islandicus (strain Y.G.57.14 / Yellowstone #1) (Sulfolobus islandicus).